Consider the following 129-residue polypeptide: MQFTEFWPFILYAGMVLVLVALIVGFSYILGQRPRERATDEPFESGVVTVGFARLRFPAKFYLVAVLFVIFDMEAAFIFAWAVAFRETGWIGYGGALAFITILGVALIYEWRVGALDWQPKGRKHKKHR.

3 helical membrane passes run 6 to 26 (FWPFILYAGMVLVLVALIVGF), 63 to 83 (LVAVLFVIFDMEAAFIFAWAV), and 89 to 109 (GWIGYGGALAFITILGVALIY).

It belongs to the complex I subunit 3 family. In terms of assembly, NDH-1 is composed of 14 different subunits. Subunits NuoA, H, J, K, L, M, N constitute the membrane sector of the complex.

The protein localises to the cell inner membrane. The enzyme catalyses a quinone + NADH + 5 H(+)(in) = a quinol + NAD(+) + 4 H(+)(out). Functionally, NDH-1 shuttles electrons from NADH, via FMN and iron-sulfur (Fe-S) centers, to quinones in the respiratory chain. The immediate electron acceptor for the enzyme in this species is believed to be ubiquinone. Couples the redox reaction to proton translocation (for every two electrons transferred, four hydrogen ions are translocated across the cytoplasmic membrane), and thus conserves the redox energy in a proton gradient. The polypeptide is NADH-quinone oxidoreductase subunit A (Nitrosococcus oceani (strain ATCC 19707 / BCRC 17464 / JCM 30415 / NCIMB 11848 / C-107)).